A 345-amino-acid chain; its full sequence is Phosphoribosylformylglycinamidine cyclo-ligase (345 aa).

Belongs to the AIR synthase family.

The protein resides in the cytoplasm. The catalysed reaction is 2-formamido-N(1)-(5-O-phospho-beta-D-ribosyl)acetamidine + ATP = 5-amino-1-(5-phospho-beta-D-ribosyl)imidazole + ADP + phosphate + H(+). It participates in purine metabolism; IMP biosynthesis via de novo pathway; 5-amino-1-(5-phospho-D-ribosyl)imidazole from N(2)-formyl-N(1)-(5-phospho-D-ribosyl)glycinamide: step 2/2. The sequence is that of Phosphoribosylformylglycinamidine cyclo-ligase from Histophilus somni (strain 2336) (Haemophilus somnus).